The primary structure comprises 266 residues: Small ribosomal subunit protein eS1 (266 aa).

Residues 235-266 (GGAGGAAKASGDDTGAKVERADGYEPPIQETV) form a disordered region. The segment covering 244–257 (SGDDTGAKVERADG) has biased composition (basic and acidic residues).

Belongs to the eukaryotic ribosomal protein eS1 family. In terms of assembly, component of the small ribosomal subunit. Mature ribosomes consist of a small (40S) and a large (60S) subunit. The 40S subunit contains about 33 different proteins and 1 molecule of RNA (18S). The 60S subunit contains about 49 different proteins and 3 molecules of RNA (28S, 5.8S and 5S).

The protein resides in the cytoplasm. Its function is as follows. Component of the small ribosomal subunit. The ribosome is a large ribonucleoprotein complex responsible for the synthesis of proteins in the cell. The sequence is that of Small ribosomal subunit protein eS1 (rps3a) from Oryzias latipes (Japanese rice fish).